A 71-amino-acid chain; its full sequence is Prokaryotic ubiquitin-like protein Pup (71 aa).

Positions M1–S30 are disordered. Residues Q23 to T56 are a coiled coil. The segment at Q27 to F65 is ARC ATPase binding. An Isoglutamyl lysine isopeptide (Glu-Lys) (interchain with K-? in acceptor proteins) cross-link involves residue E71.

It belongs to the prokaryotic ubiquitin-like protein family. Strongly interacts with the proteasome-associated ATPase ARC through a hydrophobic interface; the interacting region of Pup lies in its C-terminal half. There is one Pup binding site per ARC hexamer ring.

It functions in the pathway protein degradation; proteasomal Pup-dependent pathway. Functionally, protein modifier that is covalently attached to lysine residues of substrate proteins, thereby targeting them for proteasomal degradation. The tagging system is termed pupylation. This Bifidobacterium animalis subsp. lactis (strain AD011) protein is Prokaryotic ubiquitin-like protein Pup.